The chain runs to 63 residues: Large ribosomal subunit protein bL33 (63 aa).

It belongs to the bacterial ribosomal protein bL33 family.

The polypeptide is Large ribosomal subunit protein bL33 (Gloeobacter violaceus (strain ATCC 29082 / PCC 7421)).